The sequence spans 257 residues: Glutamate racemase (257 aa).

Substrate contacts are provided by residues 12-13 (DS) and 44-45 (YG). Cysteine 75 functions as the Proton donor/acceptor in the catalytic mechanism. Residue 76–77 (NT) coordinates substrate. Catalysis depends on cysteine 186, which acts as the Proton donor/acceptor. 187-188 (TH) is a substrate binding site.

This sequence belongs to the aspartate/glutamate racemases family.

It carries out the reaction L-glutamate = D-glutamate. It functions in the pathway cell wall biogenesis; peptidoglycan biosynthesis. Provides the (R)-glutamate required for cell wall biosynthesis. This Clostridium kluyveri (strain NBRC 12016) protein is Glutamate racemase.